The sequence spans 354 residues: Carbamoyl phosphate synthase arginine-specific small chain (354 aa).

The CPSase stretch occupies residues 1–163 (MKAYLHVASG…RTIETYGEGG (163 aa)). L-glutamine contacts are provided by serine 46, glycine 213, and glycine 215. Residues 165-352 (HLVLVDFGYK…LQTVFKGENV (188 aa)) form the Glutamine amidotransferase type-1 domain. The active-site Nucleophile is the cysteine 240. The L-glutamine site is built by leucine 241, glutamine 244, asparagine 282, and tyrosine 285. Catalysis depends on residues histidine 325 and glutamate 327.

This sequence belongs to the CarA family. As to quaternary structure, composed of two chains; the small (or glutamine) chain promotes the hydrolysis of glutamine to ammonia, which is used by the large (or ammonia) chain to synthesize carbamoyl phosphate. Tetramer of heterodimers (alpha,beta)4.

It catalyses the reaction hydrogencarbonate + L-glutamine + 2 ATP + H2O = carbamoyl phosphate + L-glutamate + 2 ADP + phosphate + 2 H(+). The enzyme catalyses L-glutamine + H2O = L-glutamate + NH4(+). Its pathway is amino-acid biosynthesis; L-arginine biosynthesis; carbamoyl phosphate from bicarbonate: step 1/1. In terms of biological role, small subunit of the glutamine-dependent carbamoyl phosphate synthetase (CPSase). CPSase catalyzes the formation of carbamoyl phosphate from the ammonia moiety of glutamine, carbonate, and phosphate donated by ATP, constituting the first step of the biosynthetic pathway leading to arginine and/or urea. The small subunit (glutamine amidotransferase) binds and cleaves glutamine to supply the large subunit with the substrate ammonia. In Geobacillus stearothermophilus (Bacillus stearothermophilus), this protein is Carbamoyl phosphate synthase arginine-specific small chain.